The following is a 355-amino-acid chain: Alanine racemase (355 aa).

Lys37 serves as the catalytic Proton acceptor; specific for D-alanine. Residue Lys37 is modified to N6-(pyridoxal phosphate)lysine. Arg129 lines the substrate pocket. Tyr251 (proton acceptor; specific for L-alanine) is an active-site residue. Met299 contributes to the substrate binding site.

This sequence belongs to the alanine racemase family. Requires pyridoxal 5'-phosphate as cofactor.

The catalysed reaction is L-alanine = D-alanine. Its pathway is amino-acid biosynthesis; D-alanine biosynthesis; D-alanine from L-alanine: step 1/1. Its function is as follows. Catalyzes the interconversion of L-alanine and D-alanine. May also act on other amino acids. The protein is Alanine racemase (alr) of Deinococcus geothermalis (strain DSM 11300 / CIP 105573 / AG-3a).